We begin with the raw amino-acid sequence, 452 residues long: Transcription factor AP-2-delta (452 aa).

Phosphoserine; by PKA is present on serine 239. The segment at 280–410 (RRKAANVTLL…VLSEMLNYLE (131 aa)) is H-S-H (helix-span-helix), dimerization. A disordered region spans residues 416-452 (KNGGAADSGQGHANSEKAPLRKTSEAAVKEGKTEKTD). Residues 429–452 (NSEKAPLRKTSEAAVKEGKTEKTD) are compositionally biased toward basic and acidic residues.

This sequence belongs to the AP-2 family. In terms of assembly, binds DNA as a dimer. Can form homodimers or heterodimers with other AP-2 family members. Highly expressed in brain, placenta, skeletal muscle, thymus, small intestine, and prostate, and expressed at lower levels in leukocyte, spleen, testis, ovary and colon. Barely detectable in heart, kidney, liver, lung or pancreas.

It localises to the nucleus. Functionally, sequence-specific DNA-binding protein that interacts with inducible viral and cellular enhancer elements to regulate transcription of selected genes. AP-2 factors bind to the consensus sequence 5'-GCCNNNGGC-3' and activate genes involved in a large spectrum of important biological functions including proper eye, face, body wall, limb and neural tube development. They also suppress a number of genes including MCAM/MUC18, C/EBP alpha and MYC. This Homo sapiens (Human) protein is Transcription factor AP-2-delta.